The sequence spans 1065 residues: Bifunctional cytochrome P450/NADPH--P450 reductase (1065 aa).

The cytochrome P450 stretch occupies residues 1 to 479 (MEKKVSAIPQ…EDKLKNDEIK (479 aa)). Cys-405 serves as a coordination point for heme. Residues 480–1065 (QHVQKTPSII…RYGKDVWAGI (586 aa)) form an NADPH--P450 reductase region. The 140-residue stretch at 496–635 (LLVLYGSDTG…QLEQWKQNMW (140 aa)) folds into the Flavodoxin-like domain. FMN contacts are provided by residues 502–507 (SDTGVA), 549–552 (SYNG), 583–585 (CGD), and 591–593 (TYQ). In terms of domain architecture, FAD-binding FR-type spans 674–907 (YEAVYASILE…RTPQSNFELP (234 aa)).

In the N-terminal section; belongs to the cytochrome P450 family. It depends on heme as a cofactor. The cofactor is FAD. Requires FMN as cofactor.

It carries out the reaction 2 oxidized [cytochrome P450] + NADPH = 2 reduced [cytochrome P450] + NADP(+) + H(+). The enzyme catalyses an organic molecule + reduced [NADPH--hemoprotein reductase] + O2 = an alcohol + oxidized [NADPH--hemoprotein reductase] + H2O + H(+). In terms of biological role, functions as a fatty acid monooxygenase. Catalyzes hydroxylation of fatty acids at omega-1, omega-2 and omega-3 positions, yielding primarily omega-1 and omega-2 hydroxylated products. Metabolizes unsaturated and saturated fatty acids as well as N-acylamino acids. Has a preference for long-chain unsaturated fatty acids over saturated fatty acids. Shows activity toward saturated fatty acids with a chain length of 9-18 carbons with preference for longer fatty acids. Also displays a NADPH-dependent reductase activity in the C-terminal domain, which allows electron transfer from NADPH to the heme iron of the cytochrome P450 N-terminal domain. This Bacillus cereus (strain ATCC 14579 / DSM 31 / CCUG 7414 / JCM 2152 / NBRC 15305 / NCIMB 9373 / NCTC 2599 / NRRL B-3711) protein is Bifunctional cytochrome P450/NADPH--P450 reductase.